Consider the following 243-residue polypeptide: Terpene cyclase dpmpB (243 aa).

The next 7 membrane-spanning stretches (helical) occupy residues 13–33, 51–71, 78–98, 112–132, 141–161, 169–189, and 207–227; these read FLEV…GWTA, ALMP…ILPF, WVHV…IKFA, LTWI…ALAA, AWSA…QLLC, SYLL…QDIL, and LWFV…LWYV.

The protein belongs to the paxB family.

It is found in the membrane. Its pathway is secondary metabolite biosynthesis; terpenoid biosynthesis. Functionally, terpene cyclase; part of the gene cluster that mediates the biosynthesis of diterpenoid pyrones. The first step of the pathway is the synthesis of the alpha-pyrone moiety by the polyketide synthase dpmpA via condensation of one acetyl-CoA starter unit with 3 malonyl-CoA units and 2 methylations. The alpha-pyrone is then combined with geranylgeranyl pyrophosphate (GGPP) formed by the GGPP synthase dpmpD through the action of the prenyltransferase dpmpC to yield a linear alpha-pyrone diterpenoid. Subsequent steps in the diterpenoid pyrone biosynthetic pathway involve the decalin core formation, which is initiated by the epoxidation of the C10-C11 olefin by the FAD-dependent oxidoreductase dpmpE, and is followed by a cyclization cascade catalyzed by the terpene cyclase dpmpB. The short chain dehydrogenase/reductase dpmpG then oxidizes the 8S hydroxy group to a ketone and the short chain dehydrogenase/reductase dpmpH reduces the ketone to the 8R hydroxy group to yield higginsianin B. Higginsianin B is further methylated by the methyltransferase dpmpI to produce the intermediate named FDDP B. The cytochrome P450 monooxygenase dpmpJ then oxidizes the C-26 methyl to primary alcohol, producing the final diterpenoid pyrone with a C-26 primary alcohol on the gamma-pyrone moiety named FDDP C. The polypeptide is Terpene cyclase dpmpB (Macrophomina phaseolina (strain MS6) (Charcoal rot fungus)).